Here is a 136-residue protein sequence, read N- to C-terminus: MFDIGFWELVLISVIGLVVLGPERLPHAIRSVMHWITTAKNMANSVKTEVTQELKLHEINENMIKASKQGLSDLDPELQKSIDEMKETAEQLSRPYKKDIDDIKTSLDKNPSGTTQQENSILDSSKTTPPRQDKNE.

Residues 1–21 (MFDIGFWELVLISVIGLVVLG) form a helical membrane-spanning segment. The tract at residues 66 to 136 (ASKQGLSDLD…TTPPRQDKNE (71 aa)) is disordered. 2 stretches are compositionally biased toward basic and acidic residues: residues 77–89 (ELQK…KETA) and 96–107 (YKKDIDDIKTSL). Positions 108 to 130 (DKNPSGTTQQENSILDSSKTTPP) are enriched in polar residues.

Belongs to the TatB family. In terms of assembly, the Tat system comprises two distinct complexes: a TatABC complex, containing multiple copies of TatA, TatB and TatC subunits, and a separate TatA complex, containing only TatA subunits. Substrates initially bind to the TatABC complex, which probably triggers association of the separate TatA complex to form the active translocon.

The protein localises to the cell inner membrane. Functionally, part of the twin-arginine translocation (Tat) system that transports large folded proteins containing a characteristic twin-arginine motif in their signal peptide across membranes. Together with TatC, TatB is part of a receptor directly interacting with Tat signal peptides. TatB may form an oligomeric binding site that transiently accommodates folded Tat precursor proteins before their translocation. In Psychromonas ingrahamii (strain DSM 17664 / CCUG 51855 / 37), this protein is Sec-independent protein translocase protein TatB.